The following is a 336-amino-acid chain: Glycerol-3-phosphate dehydrogenase [NAD(P)+] (336 aa).

Residues S14, W15, R35, R36, and K109 each contribute to the NADPH site. K109 and G139 together coordinate sn-glycerol 3-phosphate. A143 serves as a coordination point for NADPH. K194, D247, S257, R258, and N259 together coordinate sn-glycerol 3-phosphate. K194 acts as the Proton acceptor in catalysis. Position 258 (R258) interacts with NADPH. E284 provides a ligand contact to NADPH.

The protein belongs to the NAD-dependent glycerol-3-phosphate dehydrogenase family.

It localises to the cytoplasm. It catalyses the reaction sn-glycerol 3-phosphate + NAD(+) = dihydroxyacetone phosphate + NADH + H(+). The enzyme catalyses sn-glycerol 3-phosphate + NADP(+) = dihydroxyacetone phosphate + NADPH + H(+). It participates in membrane lipid metabolism; glycerophospholipid metabolism. In terms of biological role, catalyzes the reduction of the glycolytic intermediate dihydroxyacetone phosphate (DHAP) to sn-glycerol 3-phosphate (G3P), the key precursor for phospholipid synthesis. The chain is Glycerol-3-phosphate dehydrogenase [NAD(P)+] from Streptomyces coelicolor (strain ATCC BAA-471 / A3(2) / M145).